We begin with the raw amino-acid sequence, 849 residues long: MEFRKPFKSHSSYKQIISTGDQNEKTKKKKKLANLDDGDIAKTQSSGSSFDGNSYKFWQDIATDDYTKSGSFDFPQYREEITLDVNEETEETEDVSNNNNLSGSKETRVFFKINSSGTNNMSGSVRSCTSSTSFSSATMRLNLEQQLEDEGEVVVRCSSVRKTELVSRAKARSRLIDPPQEEEQQYSSWIGTSDQLRSGLLGRHSDDIEEEDDSSAEEDVPVEYRKLKMDAITLLQWMSLIALVVALVLSLGLHTWRNATLWSLHLWKWEVVLLVLICGRLVSGCGIRIIVFFIERNFLLRKRVLYFVYGVKTAVQNCLWLGLVLLAWHFLFDKKVEKETQSDVLLLMSKILVCFLLSTVLWLIKTLVVKVLASSFHVSTYFDRIQEALFHHYLIETLSGPPMLELSRIEEEEDRTQDEIYKMQKGGADLSPELCSAAFPQEKSGSTMNMKFSPIIPKTGSDNGITMDDLHKMNQKNVSAWNMKRLMKIVRNVSLSTLDEQALQNTCEDESTRQIRSEKEAKAAARKIFKNVAQPGTKHIYLEDLMRFLRVDEAMKTMCLFEGALVTKKITKSALKNWLVNAFRERRALALTLNDTKTAVNKLHHMISFLTAIVIIVIWLILLEIATSKYLLFLTSQVVLLAFMFGNSLKTVFESIIFLFIIHPYDVGDRLLIDTVEMVVEEMNILTTVFLRADNLKIVYPNILLWQKAIHNYNRSPDMGDEVTCCVHITTPPEKIAAIKQRISSYIDSKPEYWYPKADVIVKDVEDLNIVRIAIWLCHKINHQNMGERFTRRALLIEEVIKILLELDIQYRFHPLDINVKTMPTVVSSRVPPAWSQNPDLRRIILLEC.

The segment at 1–49 (MEFRKPFKSHSSYKQIISTGDQNEKTKKKKKLANLDDGDIAKTQSSGSS) is disordered. The segment covering 9–21 (SHSSYKQIISTGD) has biased composition (polar residues). Helical transmembrane passes span 231-251 (AITLLQWMSLIALVVALVLSL), 274-294 (LVLICGRLVSGCGIRIIVFFI), 313-333 (TAVQNCLWLGLVLLAWHFLFD), 344-364 (VLLLMSKILVCFLLSTVLWLI), 606-626 (MISFLTAIVIIVIWLILLEIA), and 642-662 (AFMFGNSLKTVFESIIFLFII).

The protein belongs to the MscS (TC 1.A.23) family.

The protein localises to the membrane. Functionally, mechanosensitive channel that opens in response to stretch forces in the membrane lipid bilayer. This chain is Mechanosensitive ion channel protein 7 (MSL7), found in Arabidopsis thaliana (Mouse-ear cress).